A 323-amino-acid polypeptide reads, in one-letter code: ADP/ATP translocase 4 (323 aa).

Residues Met1 to Ser23 lie on the Mitochondrial intermembrane side of the membrane. The stretch at Thr22–Leu114 is one Solcar 1 repeat. Residues Phe24–Gln53 form a helical membrane-spanning segment. The Mitochondrial matrix portion of the chain corresponds to Val54–Asn90. The chain crosses the membrane as a helical span at residues Leu91 to Phe115. ADP contacts are provided by Arg96 and Lys108. At Met116–Phe125 the chain is on the mitochondrial intermembrane side. The helical transmembrane segment at Trp126 to Val146 threads the bilayer. Solcar repeat units follow at residues Arg127–Leu217 and Thr224–Leu311. The Mitochondrial matrix portion of the chain corresponds to Val147–Gly194. A helical transmembrane segment spans residues Val195 to Lys215. Topologically, residues Gly216–Phe226 are mitochondrial intermembrane. Residues Leu227–Phe247 traverse the membrane as a helical segment. Topologically, residues Asp248–Gly287 are mitochondrial matrix. Arg251 provides a ligand contact to ADP. The important for transport activity stretch occupies residues Arg251–Met256. Residues Arg251–Met256 carry the Nucleotide carrier signature motif motif. The chain crosses the membrane as a helical span at residues Ala288–Tyr305. Residues Asp306–Asp323 are Mitochondrial intermembrane-facing.

Belongs to the mitochondrial carrier (TC 2.A.29) family. Monomer.

Its subcellular location is the mitochondrion inner membrane. It is found in the membrane. The protein localises to the cell projection. The protein resides in the cilium. It localises to the flagellum membrane. It carries out the reaction ADP(in) + ATP(out) = ADP(out) + ATP(in). The enzyme catalyses dATP(out) + ADP(in) = dATP(in) + ADP(out). The catalysed reaction is dADP(in) + ADP(out) = dADP(out) + ADP(in). It catalyses the reaction H(+)(in) = H(+)(out). The matrix-open state (m-state) is inhibited by the membrane-permeable bongkrekic acid (BKA). The cytoplasmic-open state (c-state) is inhibited by the membrane-impermeable toxic inhibitor carboxyatractyloside (CATR). Proton transporter activity is inhibited by ADP:ATP antiporter activity. Functionally, ADP:ATP antiporter that mediates import of ADP into the mitochondrial matrix for ATP synthesis, and export of ATP out to fuel the cell. Cycles between the cytoplasmic-open state (c-state) and the matrix-open state (m-state): operates by the alternating access mechanism with a single substrate-binding site intermittently exposed to either the cytosolic (c-state) or matrix (m-state) side of the inner mitochondrial membrane. Specifically required during spermatogenesis, probably to mediate ADP:ATP exchange in spermatocytes. Large ATP supplies from mitochondria may be critical for normal progression of spermatogenesis during early stages of meiotic prophase I, including DNA double-strand break repair and chromosomal synapsis. In addition to its ADP:ATP antiporter activity, also involved in mitochondrial uncoupling and mitochondrial permeability transition pore (mPTP) activity. Plays a role in mitochondrial uncoupling by acting as a proton transporter: proton transport uncouples the proton flows via the electron transport chain and ATP synthase to reduce the efficiency of ATP production and cause mitochondrial thermogenesis. Proton transporter activity is inhibited by ADP:ATP antiporter activity, suggesting that SLC25A31/ANT4 acts as a master regulator of mitochondrial energy output by maintaining a delicate balance between ATP production (ADP:ATP antiporter activity) and thermogenesis (proton transporter activity). Proton transporter activity requires free fatty acids as cofactor, but does not transport it. Among nucleotides, may also exchange ADP for dATP and dADP. Also plays a key role in mPTP opening, a non-specific pore that enables free passage of the mitochondrial membranes to solutes of up to 1.5 kDa, and which contributes to cell death. It is however unclear if SLC25A31/ANT4 constitutes a pore-forming component of mPTP or regulates it. This chain is ADP/ATP translocase 4, found in Bos taurus (Bovine).